We begin with the raw amino-acid sequence, 179 residues long: Tetratricopeptide repeat protein 36 (179 aa).

TPR repeat units follow at residues 43–76, 77–110, and 115–148; these read SSQL…CPLN, PSAY…AGPK, and CQAY…GSSF.

This sequence belongs to the TTC36 family.

The polypeptide is Tetratricopeptide repeat protein 36 (Caenorhabditis briggsae).